We begin with the raw amino-acid sequence, 353 residues long: Ribosome biogenesis protein BRX1 homolog (353 aa).

Residues 1–10 are compositionally biased toward basic residues; that stretch reads MAATKRKRRG. A disordered region spans residues 1–46; sequence MAATKRKRRGGLAVQAKKLKRDAKDGKLPAKANDVSEEAAEEEKDR. In terms of domain architecture, Brix spans 60 to 249; it reads ERILIFSSRG…LIKIFQGSFG (190 aa). Lys160 participates in a covalent cross-link: Glycyl lysine isopeptide (Lys-Gly) (interchain with G-Cter in SUMO2). Ser261 is modified (phosphoserine). Lys276 carries the post-translational modification N6-acetyllysine. Residues Lys314 and Lys322 each participate in a glycyl lysine isopeptide (Lys-Gly) (interchain with G-Cter in SUMO2) cross-link.

Belongs to the BRX1 family.

The protein resides in the nucleus. The protein localises to the nucleolus. Required for biogenesis of the 60S ribosomal subunit. In Bos taurus (Bovine), this protein is Ribosome biogenesis protein BRX1 homolog (BRIX1).